A 659-amino-acid polypeptide reads, in one-letter code: Polyamine transporter 4 (659 aa).

Polar residues-rich tracts occupy residues 1-20 (MPSS…NIQQ) and 28-45 (NVTN…TGSI). Residues 1–81 (MPSSLTKTES…LDWDGPDDPD (81 aa)) are disordered. Residues 1–99 (MPSSLTKTES…KKWYTTMTSA (99 aa)) lie on the Cytoplasmic side of the membrane. Residues 100–120 (FLCLVVTMGSSLYVSSVPELV) form a helical membrane-spanning segment. At 121 to 128 (ERYHVSQT) the chain is on the extracellular side. A helical transmembrane segment spans residues 129–149 (LALAGLTFYLLGLSTVIGAPL). The Cytoplasmic portion of the chain corresponds to 150–157 (SEVFGRKP). A helical transmembrane segment spans residues 158–178 (VYLFSLPVSMLFTMGVGLSNG). Topologically, residues 179-187 (HMRIILPLR) are extracellular. Residues 188–208 (FLSGVFASPALSVGSGTILDI) traverse the membrane as a helical segment. The Cytoplasmic portion of the chain corresponds to 209 to 215 (FDVDQVS). A helical transmembrane segment spans residues 216 to 236 (VAMTYFVLSPFLGPVLSPIMA). Over 237-246 (GFATEAKGWR) the chain is Extracellular. The chain crosses the membrane as a helical span at residues 247 to 267 (WSEWIQLIAGGLILPFIALMP). The Cytoplasmic portion of the chain corresponds to 268–316 (ETHKGIILRKRAKKRNIALKKFSREAQKEFLKTTVTITILRPLKMLVVE). Residues 317-337 (PIVFVFSVYVAFIFAILFGFF) traverse the membrane as a helical segment. Residues 338 to 355 (EAYAVIYRGVYHMSMGIS) are Extracellular-facing. A helical membrane pass occupies residues 356–376 (GLPFIGIGVGLWIGAFFYLYI). Residues 377–423 (DRKYLFPKPPAGTQPLTEKERTSKRTTPYRGARDAETGELLPVVPEK) are Cytoplasmic-facing. The segment at 387-408 (AGTQPLTEKERTSKRTTPYRGA) is disordered. Residues 424 to 444 (FLIACKFGSVALPIGLFWQAW) traverse the membrane as a helical segment. Over 445–456 (TARSDVHWMAPV) the chain is Extracellular. The chain crosses the membrane as a helical span at residues 457–477 (AAGVPFGFGLILIFFSVLMYF). The Cytoplasmic portion of the chain corresponds to 478 to 486 (STCYPPLTV). The helical transmembrane segment at 487–509 (ASCLAANNLLRYVMSSVFPLFTI) threads the bilayer. The Extracellular segment spans residues 510 to 518 (QMYTKMKIK). A helical transmembrane segment spans residues 519–539 (WASTLFALVCVVMIPIPWVFE). Residues 540-659 (KWGSKLRHKS…MATDASARMV (120 aa)) lie on the Cytoplasmic side of the membrane. Residues 587-602 (METDPSTREKPGERLS) show a composition bias toward basic and acidic residues. The tract at residues 587–631 (METDPSTREKPGERLSLRRTHTQPVPASFDREDGQHAQNRNEPIS) is disordered. Phosphothreonine occurs at positions 589, 606, and 608. Residues 622–631 (HAQNRNEPIS) are compositionally biased toward polar residues. Residues Ser-633 and Ser-646 each carry the phosphoserine modification.

It belongs to the major facilitator superfamily. DHA1 family. Polyamines/proton antiporter (TC 2.A.1.2.16) subfamily.

Its subcellular location is the cell membrane. Cell membrane polyamine/proton antiporter, involved in the detoxification of excess polyamines in the cytoplasm. Recognizes spermidine, spermine and the antimalarial drug quinidine, but not quinine, chloroquine and mefloquine. The sequence is that of Polyamine transporter 4 (TPO4) from Saccharomyces cerevisiae (strain ATCC 204508 / S288c) (Baker's yeast).